A 54-amino-acid polypeptide reads, in one-letter code: Large ribosomal subunit protein eL37 (54 aa).

Zn(2+)-binding residues include Cys-20, Cys-23, Cys-35, and Cys-38. Residues 20-38 (CRRCGHHTYNVRTKRCSHC) form a C4-type zinc finger.

It belongs to the eukaryotic ribosomal protein eL37 family. Zn(2+) serves as cofactor.

Binds to the 23S rRNA. This is Large ribosomal subunit protein eL37 (rpl37e) from Thermoplasma acidophilum (strain ATCC 25905 / DSM 1728 / JCM 9062 / NBRC 15155 / AMRC-C165).